We begin with the raw amino-acid sequence, 109 residues long: EPIDERMAL PATTERNING FACTOR-like protein 4 (109 aa).

The first 26 residues, 1–26 (MGTFRRRRRFLLAALVTFALLHLFSA), serve as a signal peptide directing secretion. Disulfide bonds link Cys-66–Cys-100, Cys-70–Cys-76, and Cys-73–Cys-102.

This sequence belongs to the plant cysteine rich small secretory peptide family. Epidermal patterning factor subfamily. Interacts with ERECTA. As to expression, expressed at the base of the apical meristem at 3 days after germination. Not detected in the hypocotyl. Expressed in developing stems soon after bolting, in inflorescence stems and in young siliques.

Its subcellular location is the secreted. Functionally, acts primarily as positive regulator of inflorescence growth. Endodermal expression is sufficient for proper inflorescence architecture. Redundantly involved with EPFL6 in procambial development regulation. Controls stomatal patterning. Mediates stomatal development inhibition. TMM (AC Q9SSD1) functions to dampen or block CLL2 signaling. Acts as a growth-regulatory ligand for ERECTA family receptors. The sequence is that of EPIDERMAL PATTERNING FACTOR-like protein 4 from Arabidopsis thaliana (Mouse-ear cress).